We begin with the raw amino-acid sequence, 1129 residues long: Phytochrome A (1129 aa).

The GAF domain maps to 217–399 (SMERLCDTMV…VFAIHVSKEL (183 aa)). Residue C322 participates in phytochromobilin binding. PAS domains lie at 622 to 692 (VTSE…LQGK) and 755 to 826 (DYKA…VNLG). One can recognise a Histidine kinase domain in the interval 906-1123 (YLRRQAKNPL…TFIITVELAA (218 aa)).

The protein belongs to the phytochrome family. In terms of assembly, homodimer. Post-translationally, contains one covalently linked phytochromobilin chromophore.

Regulatory photoreceptor which exists in two forms that are reversibly interconvertible by light: the Pr form that absorbs maximally in the red region of the spectrum and the Pfr form that absorbs maximally in the far-red region. Photoconversion of Pr to Pfr induces an array of morphogenic responses, whereas reconversion of Pfr to Pr cancels the induction of those responses. Pfr controls the expression of a number of nuclear genes including those encoding the small subunit of ribulose-bisphosphate carboxylase, chlorophyll A/B binding protein, protochlorophyllide reductase, rRNA, etc. It also controls the expression of its own gene(s) in a negative feedback fashion. This chain is Phytochrome A (PHYA), found in Petroselinum crispum (Parsley).